The following is a 118-amino-acid chain: Large ribosomal subunit protein bL19 (118 aa).

The protein belongs to the bacterial ribosomal protein bL19 family.

Functionally, this protein is located at the 30S-50S ribosomal subunit interface and may play a role in the structure and function of the aminoacyl-tRNA binding site. The chain is Large ribosomal subunit protein bL19 from Helicobacter hepaticus (strain ATCC 51449 / 3B1).